A 103-amino-acid polypeptide reads, in one-letter code: Co-chaperonin GroES (103 aa).

The protein belongs to the GroES chaperonin family. As to quaternary structure, heptamer of 7 subunits arranged in a ring. Interacts with the chaperonin GroEL.

It is found in the cytoplasm. Functionally, together with the chaperonin GroEL, plays an essential role in assisting protein folding. The GroEL-GroES system forms a nano-cage that allows encapsulation of the non-native substrate proteins and provides a physical environment optimized to promote and accelerate protein folding. GroES binds to the apical surface of the GroEL ring, thereby capping the opening of the GroEL channel. This chain is Co-chaperonin GroES, found in Prochlorococcus marinus (strain MIT 9312).